The primary structure comprises 374 residues: MDTAGKVIKCKAAVLWGTNQPFSIEDIEVAPPKAKEVRVKILATGICGTDDHVIKGTMVSKFPVIVGHEAVGIVESVGEEVTTVRPGDKVIPLFLPQCRECNPCRNPEGNLCIRSDLTGRGVLADGTTRFTCKGKPVQHFMNTSTFTEYTVLDESSVAKIDAEAPPEKACLIGCGFSTGYGAAVKTAKVSPGSTCAVFGLGGVGLSVVMGCKAAGASRIIGIDINKDKFQKALDVGATECINPRDFTKPISEVLSDMTGNTVQYTFEVIGRLETMVDALSSCHMNYGTSVVVGAPPSAKMLSYDPMLLFTGRTWKGCVFGGWKSRDDVPKLVTEFLEKKFDLGQLITHTLPFHNISEGFELLYSGQSIRTVLTF.

Met1 carries the N-acetylmethionine modification. Positions 47, 68, 98, 101, 104, 112, and 174 each coordinate Zn(2+). Residues 199 to 204, Asp223, Lys228, 292 to 294, and Arg369 each bind NAD(+); these read GLGGVG and VGA.

The protein belongs to the zinc-containing alcohol dehydrogenase family. Class-IV subfamily. Homodimer. Requires Zn(2+) as cofactor. In terms of tissue distribution, preferentially expressed in stomach.

Its subcellular location is the cytoplasm. It catalyses the reaction a primary alcohol + NAD(+) = an aldehyde + NADH + H(+). The enzyme catalyses 10-hydroxydecanoate + NAD(+) = 10-oxodecanoate + NADH + H(+). It carries out the reaction all-trans-retinol + NAD(+) = all-trans-retinal + NADH + H(+). The catalysed reaction is 9-cis-retinol + NAD(+) = 9-cis-retinal + NADH + H(+). It catalyses the reaction all-trans-3,4-didehydroretinol + NAD(+) = all-trans-3,4-didehydroretinal + NADH + H(+). The enzyme catalyses all-trans-4-hydroxyretinol + NAD(+) = all-trans-4-hydroxyretinal + NADH + H(+). It carries out the reaction all-trans-4-oxoretinol + NAD(+) = all-trans-4-oxoretinal + NADH + H(+). The catalysed reaction is 12-hydroxydodecanoate + NAD(+) = 12-oxododecanoate + NADH + H(+). It catalyses the reaction 16-hydroxyhexadecanoate + NAD(+) = 16-oxohexadecanoate + NADH + H(+). The enzyme catalyses hexan-1-ol + NAD(+) = hexanal + NADH + H(+). It carries out the reaction (E)-hex-2-en-1-ol + NAD(+) = (E)-hex-2-enal + NADH + H(+). The catalysed reaction is (E)-4-hydroxynon-2-en-1-ol + NAD(+) = (E)-4-hydroxynon-2-enal + NADH + H(+). Its activity is regulated as follows. Retinol oxidation is inhibited by the detergent Tween 80. Ethanol inhibits both all-trans-retinol and 9-cis-retinol oxidation. 13-cis-retinol is an effective competitive inhibitor of the 9-cis-retinol oxidation. All-trans-retinoic acid is a powerful inhibitor of all-trans-retinol oxidation. 13-cis-retinoic acid is a powerful inhibitor of all-trans-retinol oxidation. Cimetidine and ranitidine inhibited ethanol oxidation. In terms of biological role, catalyzes the NAD-dependent oxidation of all-trans-retinol, alcohol, aldehyde and omega-hydroxy fatty acids and their derivatives. Oxidizes preferentially all trans-retinol, all-trans-4-hydroxyretinol, 9-cis-retinol, 2-hexenol, and long chain omega-hydroxy fatty acids such as juniperic acid. In vitro can also catalyze the NADH-dependent reduction of all-trans-retinal and aldehydes and their derivatives. Reduces preferentially all trans-retinal, all-trans-4-oxoretinal and hexanal. Catalyzes in the oxidative direction with higher efficiency. Therefore may participate in retinoid metabolism, fatty acid omega-oxidation, and elimination of cytotoxic aldehydes produced by lipid peroxidation. In Rattus norvegicus (Rat), this protein is All-trans-retinol dehydrogenase [NAD(+)] ADH7 (Adh7).